An 814-amino-acid chain; its full sequence is Echinoderm microtubule-associated protein-like 1 (814 aa).

Residues 31–72 (SMEISDRIASLEQRVQMQEDDIQLLKSALADVVRRLNITEEQ) are a coiled coil. Residues 77-185 (NRKGPTKARP…EPTFSPEEGY (109 aa)) are disordered. The span at 92–101 (PLRTTVNNGT) shows a compositional bias: polar residues. Residues 103–115 (LPKKPSASLPSPS) are compositionally biased toward low complexity. Position 113 is a phosphoserine (Ser113). Over residues 127-137 (KSINRTSSSER) the composition is skewed to polar residues. Residues 142-152 (GRRESSGDSKG) show a composition bias toward basic and acidic residues. Over residues 155-167 (NRTGSTSSSSSGK) the composition is skewed to low complexity. The tract at residues 175–814 (KEPTFSPEEG…DTSIMQWRVI (640 aa)) is tandem atypical propeller in EMLs. WD repeat units lie at residues 260–309 (EQLQ…IWDS), 314–357 (TLHV…VWDW), 362–399 (RLAD…FWTL), 408–445 (QGLF…VWGK), 449–488 (RISY…SWNG), 492–529 (KLHK…LQGT), 534–571 (FTPI…LWDA), 577–612 (VWDK…VFDT), 616–654 (DLVT…IYGV), 663–700 (RVGK…YWVP), 708–767 (SVET…LFSY), and 774–813 (APSH…QWRV).

The protein belongs to the WD repeat EMAP family. In terms of assembly, homotrimer; self-association is mediated by the N-terminal coiled coil. Does not interact with EML3. Binds repolymerizing microtubules. Binds unpolymerized tubulins via its WD repeat region. Interacts with TASOR.

It is found in the cytoplasm. It localises to the perinuclear region. Its subcellular location is the cytoskeleton. Its function is as follows. Modulates the assembly and organization of the microtubule cytoskeleton, and probably plays a role in regulating the orientation of the mitotic spindle and the orientation of the plane of cell division. Required for normal proliferation of neuronal progenitor cells in the developing brain and for normal brain development. Does not affect neuron migration per se. This is Echinoderm microtubule-associated protein-like 1 (Eml1) from Rattus norvegicus (Rat).